The chain runs to 174 residues: MRKFFKYFLFIVVFLFHGFMFSVVNYVFPHYDVTRVTGVEVKRVDKDGPITKSNPADGPTRDVYYINTQNDDGKIMVYRNEDTRWGFPFYFKFGSANLQAEAQALGNDNKLVQIKYYGWRITMVDEYRNATSIKEITADDTPSNPIVSWILYVFLLATLFLSIQFIRGWFDSDK.

The next 2 membrane-spanning stretches (helical) occupy residues 8-28 (FLFI…NYVF) and 146-166 (IVSW…IQFI).

Its subcellular location is the cell membrane. This is an uncharacterized protein from Haemophilus influenzae (strain ATCC 51907 / DSM 11121 / KW20 / Rd).